A 146-amino-acid chain; its full sequence is Deoxyuridine 5'-triphosphate nucleotidohydrolase (146 aa).

Residues arginine 66 to glycine 68, asparagine 79, and threonine 83 to aspartate 85 each bind substrate.

Belongs to the dUTPase family. It depends on Mg(2+) as a cofactor.

It carries out the reaction dUTP + H2O = dUMP + diphosphate + H(+). Its pathway is pyrimidine metabolism; dUMP biosynthesis; dUMP from dCTP (dUTP route): step 2/2. In terms of biological role, this enzyme is involved in nucleotide metabolism: it produces dUMP, the immediate precursor of thymidine nucleotides and it decreases the intracellular concentration of dUTP so that uracil cannot be incorporated into DNA. The polypeptide is Deoxyuridine 5'-triphosphate nucleotidohydrolase (Citrifermentans bemidjiense (strain ATCC BAA-1014 / DSM 16622 / JCM 12645 / Bem) (Geobacter bemidjiensis)).